A 174-amino-acid polypeptide reads, in one-letter code: MATGPRYKVPFRRRREGRTNYHLRLKLLLSGQDRVVVRKSARNVQIQLLAPTPEGDITYSSAVSSELAKYGYTGATGNTTAAYLTGLLFGLKSLQKGYEGGILDIGLQASSAGSRVYAALKGIVDSGFEIPCSSDVFPSDERIRGEHIAEYREESSDLPEQFEATKEKIFAEFS.

Belongs to the universal ribosomal protein uL18 family. As to quaternary structure, part of the 50S ribosomal subunit. Contacts the 5S and 23S rRNAs.

Its function is as follows. This is one of the proteins that bind and probably mediate the attachment of the 5S RNA into the large ribosomal subunit, where it forms part of the central protuberance. In Methanosarcina mazei (strain ATCC BAA-159 / DSM 3647 / Goe1 / Go1 / JCM 11833 / OCM 88) (Methanosarcina frisia), this protein is Large ribosomal subunit protein uL18.